The sequence spans 310 residues: uncharacterized protein (310 aa).

Residue H239 is part of the active site.

The protein belongs to the IUNH family.

It localises to the cytoplasm. The protein localises to the nucleus. This is an uncharacterized protein from Schizosaccharomyces pombe (strain 972 / ATCC 24843) (Fission yeast).